A 235-amino-acid chain; its full sequence is Phosphoribosylaminoimidazole-succinocarboxamide synthase (235 aa).

Belongs to the SAICAR synthetase family.

The catalysed reaction is 5-amino-1-(5-phospho-D-ribosyl)imidazole-4-carboxylate + L-aspartate + ATP = (2S)-2-[5-amino-1-(5-phospho-beta-D-ribosyl)imidazole-4-carboxamido]succinate + ADP + phosphate + 2 H(+). The protein operates within purine metabolism; IMP biosynthesis via de novo pathway; 5-amino-1-(5-phospho-D-ribosyl)imidazole-4-carboxamide from 5-amino-1-(5-phospho-D-ribosyl)imidazole-4-carboxylate: step 1/2. This chain is Phosphoribosylaminoimidazole-succinocarboxamide synthase, found in Clostridium perfringens (strain SM101 / Type A).